The chain runs to 353 residues: Quinolinate synthase (353 aa).

H47 and S68 together coordinate iminosuccinate. C113 is a binding site for [4Fe-4S] cluster. Iminosuccinate contacts are provided by residues 139–141 (YAN) and S156. A [4Fe-4S] cluster-binding site is contributed by C200. Iminosuccinate contacts are provided by residues 226 to 228 (HPE) and T243. C297 is a [4Fe-4S] cluster binding site.

This sequence belongs to the quinolinate synthase family. Type 1 subfamily. Requires [4Fe-4S] cluster as cofactor.

The protein resides in the cytoplasm. The catalysed reaction is iminosuccinate + dihydroxyacetone phosphate = quinolinate + phosphate + 2 H2O + H(+). It participates in cofactor biosynthesis; NAD(+) biosynthesis; quinolinate from iminoaspartate: step 1/1. Its function is as follows. Catalyzes the condensation of iminoaspartate with dihydroxyacetone phosphate to form quinolinate. This is Quinolinate synthase from Vibrio campbellii (strain ATCC BAA-1116).